We begin with the raw amino-acid sequence, 652 residues long: p-hydroxybenzoic acid efflux pump subunit AaeB (652 aa).

The next 11 helical transmembrane spans lie at Phe-8 to Leu-28, Ala-34 to Phe-54, Leu-64 to Ile-84, Ala-88 to Ile-108, Leu-118 to Leu-138, Glu-149 to Val-169, Leu-367 to Ile-387, Phe-404 to Pro-424, Ser-429 to Gln-449, Ile-453 to Thr-473, and Leu-480 to Ile-500.

Belongs to the aromatic acid exporter ArAE (TC 2.A.85) family.

It is found in the cell inner membrane. In terms of biological role, forms an efflux pump with AaeA. Could function as a metabolic relief valve, allowing to eliminate certain compounds when they accumulate to high levels in the cell. The sequence is that of p-hydroxybenzoic acid efflux pump subunit AaeB from Erwinia billingiae (strain Eb661).